A 559-amino-acid chain; its full sequence is DNA ligase (559 aa).

Glu-247 lines the ATP pocket. Lys-249 acts as the N6-AMP-lysine intermediate in catalysis. Residues Arg-254, Arg-269, Glu-299, Phe-339, Arg-414, and Lys-420 each coordinate ATP.

This sequence belongs to the ATP-dependent DNA ligase family. It depends on Mg(2+) as a cofactor.

The catalysed reaction is ATP + (deoxyribonucleotide)n-3'-hydroxyl + 5'-phospho-(deoxyribonucleotide)m = (deoxyribonucleotide)n+m + AMP + diphosphate.. In terms of biological role, DNA ligase that seals nicks in double-stranded DNA during DNA replication, DNA recombination and DNA repair. This Pyrococcus abyssi protein is DNA ligase.